Consider the following 241-residue polypeptide: Uridylate kinase (241 aa).

Residue 12–15 coordinates ATP; sequence KLSG. Residues 20-25 are involved in allosteric activation by GTP; that stretch reads GDKGTG. Gly54 contacts UMP. Positions 55 and 59 each coordinate ATP. UMP-binding positions include Asp74 and 135-142; that span reads TGSPYFST. Residues Asn163, Tyr169, and Asp172 each coordinate ATP.

It belongs to the UMP kinase family. In terms of assembly, homohexamer.

It is found in the cytoplasm. It catalyses the reaction UMP + ATP = UDP + ADP. The protein operates within pyrimidine metabolism; CTP biosynthesis via de novo pathway; UDP from UMP (UMPK route): step 1/1. Allosterically activated by GTP. Inhibited by UTP. Its function is as follows. Catalyzes the reversible phosphorylation of UMP to UDP. The polypeptide is Uridylate kinase (Pediococcus pentosaceus (strain ATCC 25745 / CCUG 21536 / LMG 10740 / 183-1w)).